The following is a 318-amino-acid chain: Myoblast determination protein 1 (318 aa).

Methionine 1 is covalently cross-linked (Peptide (Met-Gly) (interchain with G-Cter in ubiquitin)). Lysine 104 carries the N6-methyllysine; by EHMT2 modification. Residues 109–160 (DRRKAATMRERRRLSKVNEAFETLKRCTSSNPNQRLPKVEILRNAIRYIEGL) enclose the bHLH domain. 2 disordered regions span residues 175–224 (AAFY…RQNG) and 262–318 (SPAA…YQVL). A compositionally biased stretch (polar residues) spans 196 to 206 (SDASSPRSNCS). Residues 262 to 271 (SPAAPSLLLP) show a composition bias toward low complexity. Residues 272–282 (DAPPESPPGPP) show a composition bias toward pro residues. Positions 290–304 (AEQGTQTPSPDSTPQ) are enriched in polar residues.

As to quaternary structure, efficient DNA binding requires dimerization with another bHLH protein. Seems to form active heterodimers with ITF-2. Interacts with SUV39H1. Interacts with DDX5. Interacts with CHD2. Interacts with TSC22D3. Interacts with SETD3. Interacts with P-TEFB complex; promotes the transcriptional activity of MYOD1 through its CDK9-mediated phosphorylation. Interacts with CSRP3. Interacts with NUPR1. In terms of processing, phosphorylated by CDK9. This phosphorylation promotes its function in muscle differentiation. Acetylated by a complex containing EP300 and PCAF. The acetylation is essential to activate target genes. Conversely, its deacetylation by SIRT1 inhibits its function. Post-translationally, ubiquitinated on the N-terminus; which is required for proteasomal degradation. In terms of processing, methylation at Lys-104 by EHMT2/G9a inhibits myogenic activity.

It localises to the nucleus. Functionally, acts as a transcriptional activator that promotes transcription of muscle-specific target genes and plays a role in muscle differentiation. Together with MYF5 and MYOG, co-occupies muscle-specific gene promoter core region during myogenesis. Induces fibroblasts to differentiate into myoblasts. Interacts with and is inhibited by the twist protein. This interaction probably involves the basic domains of both proteins. This Rattus norvegicus (Rat) protein is Myoblast determination protein 1 (Myod1).